The chain runs to 62 residues: Frontoxin III (62 aa).

4 disulfides stabilise this stretch: Cys3/Cys24, Cys17/Cys41, Cys43/Cys54, and Cys55/Cys60.

In terms of tissue distribution, expressed by the venom gland.

It localises to the secreted. Functionally, binds to muscle nicotinic acetylcholine receptor (nAChR) and inhibit acetylcholine from binding to the receptor, thereby impairing neuromuscular transmission. This Micrurus frontalis (Coral snake) protein is Frontoxin III.